The primary structure comprises 103 residues: Small ribosomal subunit protein uS10 (103 aa).

Belongs to the universal ribosomal protein uS10 family. As to quaternary structure, part of the 30S ribosomal subunit.

Its function is as follows. Involved in the binding of tRNA to the ribosomes. This chain is Small ribosomal subunit protein uS10, found in Alcanivorax borkumensis (strain ATCC 700651 / DSM 11573 / NCIMB 13689 / SK2).